The chain runs to 206 residues: MTMARVLVASRNAKKLAELRRILDDAGVAGVQIVGLDDVPPYDEAPETGATFEENALAKARDGAAATGLPCVADDSGLAVDALNGMPGVLSARWSGTHGDDAANNALLLAQLRDVPDERRGARFVSACALVVPGGTETVVRGEWPGTIGRKPMGEGGFGYDPLFVPDGGDVTAAQLTPAAKDAASHRGRALRHLLPALAALADRTE.

Residue 10–15 (SRNAKK) participates in substrate binding. The active-site Proton acceptor is the Asp-75. Asp-75 contacts Mg(2+). Substrate-binding positions include Ser-76, 158–161 (FGYD), Lys-181, and 186–187 (HR).

This sequence belongs to the HAM1 NTPase family. As to quaternary structure, homodimer. Requires Mg(2+) as cofactor.

It catalyses the reaction XTP + H2O = XMP + diphosphate + H(+). The catalysed reaction is dITP + H2O = dIMP + diphosphate + H(+). The enzyme catalyses ITP + H2O = IMP + diphosphate + H(+). Pyrophosphatase that catalyzes the hydrolysis of nucleoside triphosphates to their monophosphate derivatives, with a high preference for the non-canonical purine nucleotides XTP (xanthosine triphosphate), dITP (deoxyinosine triphosphate) and ITP. Seems to function as a house-cleaning enzyme that removes non-canonical purine nucleotides from the nucleotide pool, thus preventing their incorporation into DNA/RNA and avoiding chromosomal lesions. The sequence is that of dITP/XTP pyrophosphatase from Nocardia farcinica (strain IFM 10152).